The following is a 1422-amino-acid chain: DNA-directed RNA polymerase subunit beta (1422 aa).

The segment at 1392–1422 is disordered; sequence QAAREAAERDLGGGPLGAPRGAVASGEKSSA.

The protein belongs to the RNA polymerase beta chain family. In terms of assembly, the RNAP catalytic core consists of 2 alpha, 1 beta, 1 beta' and 1 omega subunit. When a sigma factor is associated with the core the holoenzyme is formed, which can initiate transcription.

It carries out the reaction RNA(n) + a ribonucleoside 5'-triphosphate = RNA(n+1) + diphosphate. DNA-dependent RNA polymerase catalyzes the transcription of DNA into RNA using the four ribonucleoside triphosphates as substrates. The protein is DNA-directed RNA polymerase subunit beta of Anaeromyxobacter dehalogenans (strain 2CP-1 / ATCC BAA-258).